We begin with the raw amino-acid sequence, 140 residues long: Large ribosomal subunit protein uL11 (140 aa).

Belongs to the universal ribosomal protein uL11 family. In terms of assembly, part of the ribosomal stalk of the 50S ribosomal subunit. Interacts with L10 and the large rRNA to form the base of the stalk. L10 forms an elongated spine to which L12 dimers bind in a sequential fashion forming a multimeric L10(L12)X complex. In terms of processing, one or more lysine residues are methylated.

Its function is as follows. Forms part of the ribosomal stalk which helps the ribosome interact with GTP-bound translation factors. The chain is Large ribosomal subunit protein uL11 from Karelsulcia muelleri (strain GWSS) (Sulcia muelleri).